Reading from the N-terminus, the 93-residue chain is Small ribosomal subunit protein bS18 (93 aa).

The protein belongs to the bacterial ribosomal protein bS18 family. In terms of assembly, part of the 30S ribosomal subunit. Forms a tight heterodimer with protein bS6.

In terms of biological role, binds as a heterodimer with protein bS6 to the central domain of the 16S rRNA, where it helps stabilize the platform of the 30S subunit. In Acidovorax ebreus (strain TPSY) (Diaphorobacter sp. (strain TPSY)), this protein is Small ribosomal subunit protein bS18.